The sequence spans 485 residues: D-alanine--D-alanyl carrier protein ligase (485 aa).

An ATP-binding site is contributed by 144 to 145; it reads TS. Asp189 lines the D-alanine pocket. An ATP-binding site is contributed by 284-289; the sequence is NTYGPT. Val293 lines the D-alanine pocket. Residues Asp365 and Lys473 each coordinate ATP. Lys473 contacts D-alanine.

Belongs to the ATP-dependent AMP-binding enzyme family. DltA subfamily.

It localises to the cytoplasm. It carries out the reaction holo-[D-alanyl-carrier protein] + D-alanine + ATP = D-alanyl-[D-alanyl-carrier protein] + AMP + diphosphate. Its pathway is cell wall biogenesis; lipoteichoic acid biosynthesis. Functionally, catalyzes the first step in the D-alanylation of lipoteichoic acid (LTA), the activation of D-alanine and its transfer onto the D-alanyl carrier protein (Dcp) DltC. In an ATP-dependent two-step reaction, forms a high energy D-alanyl-AMP intermediate, followed by transfer of the D-alanyl residue as a thiol ester to the phosphopantheinyl prosthetic group of the Dcp. D-alanylation of LTA plays an important role in modulating the properties of the cell wall in Gram-positive bacteria, influencing the net charge of the cell wall. The sequence is that of D-alanine--D-alanyl carrier protein ligase from Staphylococcus aureus (strain bovine RF122 / ET3-1).